The chain runs to 307 residues: Ribonuclease Z (307 aa).

Zn(2+) is bound by residues His61, His63, Asp65, His66, His138, Asp208, and His264. Asp65 serves as the catalytic Proton acceptor.

It belongs to the RNase Z family. In terms of assembly, homodimer. The cofactor is Zn(2+).

The catalysed reaction is Endonucleolytic cleavage of RNA, removing extra 3' nucleotides from tRNA precursor, generating 3' termini of tRNAs. A 3'-hydroxy group is left at the tRNA terminus and a 5'-phosphoryl group is left at the trailer molecule.. In terms of biological role, zinc phosphodiesterase, which displays some tRNA 3'-processing endonuclease activity. Probably involved in tRNA maturation, by removing a 3'-trailer from precursor tRNA. In Pyrococcus horikoshii (strain ATCC 700860 / DSM 12428 / JCM 9974 / NBRC 100139 / OT-3), this protein is Ribonuclease Z.